A 569-amino-acid chain; its full sequence is Probable protein phosphatase 2C BIPP2C1 (569 aa).

Disordered regions lie at residues Glu120–Gly214 and Ser251–Ile279. The segment covering Glu179–Gly188 has biased composition (basic and acidic residues). In terms of domain architecture, PPM-type phosphatase spans Ala329 to Val564. 4 residues coordinate Mn(2+): Asp358, Gly359, Asp488, and Asp555.

Belongs to the PP2C family. Requires Mg(2+) as cofactor. Mn(2+) is required as a cofactor.

It catalyses the reaction O-phospho-L-seryl-[protein] + H2O = L-seryl-[protein] + phosphate. The enzyme catalyses O-phospho-L-threonyl-[protein] + H2O = L-threonyl-[protein] + phosphate. In terms of biological role, may play a role in responses to biotic and abiotic stresses. This is Probable protein phosphatase 2C BIPP2C1 (BIPP2C1) from Oryza sativa subsp. japonica (Rice).